Reading from the N-terminus, the 192-residue chain is Probable GTP-binding protein EngB (192 aa).

Positions 22 to 192 (QIPEIVFAGR…LLAHLAQYIR (171 aa)) constitute an EngB-type G domain. GTP is bound by residues 30–37 (GRSNVGKS), 57–61 (GKTRL), 75–78 (DLPG), 142–145 (TKDD), and 172–174 (YSS). Residues serine 37 and threonine 59 each contribute to the Mg(2+) site.

The protein belongs to the TRAFAC class TrmE-Era-EngA-EngB-Septin-like GTPase superfamily. EngB GTPase family. It depends on Mg(2+) as a cofactor.

Its function is as follows. Necessary for normal cell division and for the maintenance of normal septation. This is Probable GTP-binding protein EngB from Chlorobium phaeobacteroides (strain DSM 266 / SMG 266 / 2430).